Reading from the N-terminus, the 334-residue chain is Anthranilate phosphoribosyltransferase (334 aa).

Residues Gly79, 82-83 (GD), Ser87, 89-92 (NIST), 107-115 (KHGNRSISS), and Ser119 each bind 5-phospho-alpha-D-ribose 1-diphosphate. Gly79 provides a ligand contact to anthranilate. Ser91 lines the Mg(2+) pocket. Asn110 contacts anthranilate. Residue Arg165 coordinates anthranilate. Mg(2+)-binding residues include Asp224 and Glu225.

Belongs to the anthranilate phosphoribosyltransferase family. Homodimer. The cofactor is Mg(2+).

The enzyme catalyses N-(5-phospho-beta-D-ribosyl)anthranilate + diphosphate = 5-phospho-alpha-D-ribose 1-diphosphate + anthranilate. It functions in the pathway amino-acid biosynthesis; L-tryptophan biosynthesis; L-tryptophan from chorismate: step 2/5. Its function is as follows. Catalyzes the transfer of the phosphoribosyl group of 5-phosphorylribose-1-pyrophosphate (PRPP) to anthranilate to yield N-(5'-phosphoribosyl)-anthranilate (PRA). The sequence is that of Anthranilate phosphoribosyltransferase from Streptococcus pneumoniae serotype 19F (strain G54).